The following is a 361-amino-acid chain: S-adenosylmethionine:tRNA ribosyltransferase-isomerase (361 aa).

Belongs to the QueA family. As to quaternary structure, monomer.

The protein resides in the cytoplasm. It carries out the reaction 7-aminomethyl-7-carbaguanosine(34) in tRNA + S-adenosyl-L-methionine = epoxyqueuosine(34) in tRNA + adenine + L-methionine + 2 H(+). The protein operates within tRNA modification; tRNA-queuosine biosynthesis. Functionally, transfers and isomerizes the ribose moiety from AdoMet to the 7-aminomethyl group of 7-deazaguanine (preQ1-tRNA) to give epoxyqueuosine (oQ-tRNA). This is S-adenosylmethionine:tRNA ribosyltransferase-isomerase from Glaesserella parasuis serovar 5 (strain SH0165) (Haemophilus parasuis).